The following is a 310-amino-acid chain: tRNA-splicing endonuclease subunit Sen34 (310 aa).

Residues 119 to 177 (GQAAKKQKLEQASGASSSQEAGSSQAAKEDETSDGQASGEQEEAGPSSSQAGPSNGVAP) are disordered. The segment covering 128–144 (EQASGASSSQEAGSSQA) has biased composition (low complexity). Catalysis depends on residues Tyr247, His255, and Lys286.

It belongs to the tRNA-intron endonuclease family. TRNA splicing endonuclease is a heterotetramer composed of TSEN2, TSEN15, TSEN34/LENG5 and TSEN54. tRNA splicing endonuclease complex also contains proteins of the pre-mRNA 3'-end processing machinery such as CLP1, CPSF1, CPSF4 and CSTF2.

Its subcellular location is the nucleus. It is found in the nucleolus. The catalysed reaction is pretRNA = a 3'-half-tRNA molecule with a 5'-OH end + a 5'-half-tRNA molecule with a 2',3'-cyclic phosphate end + an intron with a 2',3'-cyclic phosphate and a 5'-hydroxyl terminus.. Its function is as follows. Constitutes one of the two catalytic subunit of the tRNA-splicing endonuclease complex, a complex responsible for identification and cleavage of the splice sites in pre-tRNA. It cleaves pre-tRNA at the 5'- and 3'-splice sites to release the intron. The products are an intron and two tRNA half-molecules bearing 2',3'-cyclic phosphate and 5'-OH termini. There are no conserved sequences at the splice sites, but the intron is invariably located at the same site in the gene, placing the splice sites an invariant distance from the constant structural features of the tRNA body. It probably carries the active site for 3'-splice site cleavage. The tRNA splicing endonuclease is also involved in mRNA processing via its association with pre-mRNA 3'-end processing factors, establishing a link between pre-tRNA splicing and pre-mRNA 3'-end formation, suggesting that the endonuclease subunits function in multiple RNA-processing events. The polypeptide is tRNA-splicing endonuclease subunit Sen34 (TSEN34) (Homo sapiens (Human)).